The sequence spans 159 residues: 2-C-methyl-D-erythritol 2,4-cyclodiphosphate synthase (159 aa).

Positions 10 and 12 each coordinate a divalent metal cation. 4-CDP-2-C-methyl-D-erythritol 2-phosphate-binding positions include 10–12 (DVH) and 36–37 (HS). Histidine 44 contributes to the a divalent metal cation binding site. 4-CDP-2-C-methyl-D-erythritol 2-phosphate-binding positions include 58-60 (DIG), 63-67 (FPDTD), 102-108 (AQAPKMA), 134-137 (TTTE), phenylalanine 141, and arginine 144.

It belongs to the IspF family. As to quaternary structure, homotrimer. The cofactor is a divalent metal cation.

The catalysed reaction is 4-CDP-2-C-methyl-D-erythritol 2-phosphate = 2-C-methyl-D-erythritol 2,4-cyclic diphosphate + CMP. It participates in isoprenoid biosynthesis; isopentenyl diphosphate biosynthesis via DXP pathway; isopentenyl diphosphate from 1-deoxy-D-xylulose 5-phosphate: step 4/6. Functionally, involved in the biosynthesis of isopentenyl diphosphate (IPP) and dimethylallyl diphosphate (DMAPP), two major building blocks of isoprenoid compounds. Catalyzes the conversion of 4-diphosphocytidyl-2-C-methyl-D-erythritol 2-phosphate (CDP-ME2P) to 2-C-methyl-D-erythritol 2,4-cyclodiphosphate (ME-CPP) with a corresponding release of cytidine 5-monophosphate (CMP). This chain is 2-C-methyl-D-erythritol 2,4-cyclodiphosphate synthase, found in Shewanella piezotolerans (strain WP3 / JCM 13877).